A 247-amino-acid chain; its full sequence is Triosephosphate isomerase (247 aa).

Positions 10 and 12 each coordinate substrate. Histidine 94 serves as the catalytic Electrophile. Catalysis depends on glutamate 164, which acts as the Proton acceptor.

The protein belongs to the triosephosphate isomerase family. Homodimer.

It catalyses the reaction D-glyceraldehyde 3-phosphate = dihydroxyacetone phosphate. It participates in carbohydrate biosynthesis; gluconeogenesis. Its pathway is carbohydrate degradation; glycolysis; D-glyceraldehyde 3-phosphate from glycerone phosphate: step 1/1. In Drosophila melanogaster (Fruit fly), this protein is Triosephosphate isomerase (Tpi).